The following is a 388-amino-acid chain: Cell adhesion molecule 4 (388 aa).

The N-terminal stretch at 1 to 20 (MGRARRFQWPLLLLWAAAAG) is a signal peptide. The Ig-like V-type domain maps to 21 to 119 (PGTGQEVQTE…DTHHQIATLT (99 aa)). The Extracellular segment spans residues 25-324 (QEVQTENVTV…VEAQTSVPYA (300 aa)). N31 and N67 each carry an N-linked (GlcNAc...) asparagine glycan. Intrachain disulfides connect C44/C104, C145/C199, and C245/C291. Ig-like C2-type domains follow at residues 124–219 (PENP…YVLD) and 224–307 (PTAR…YVLV). N-linked (GlcNAc...) asparagine glycosylation occurs at N286. The chain crosses the membrane as a helical span at residues 325-345 (IVGGILALLVFLIICVLVGMV). Residues 346-388 (WCSVRQKGSYLTHEASGLDEQGEAREAFLNGGDGHKRKEEFFI) are Cytoplasmic-facing. Position 361 is a phosphoserine (S361).

The protein belongs to the nectin family. As to quaternary structure, monomer and homodimer. N-glycosylated. In terms of tissue distribution, expressed in the brain and several organs including the kidney and liver.

It is found in the membrane. Functionally, involved in the cell-cell adhesion. Has calcium- and magnesium-independent cell-cell adhesion activity. May have tumor-suppressor activity. The protein is Cell adhesion molecule 4 (Cadm4) of Mus musculus (Mouse).